Reading from the N-terminus, the 80-residue chain is Moroidotoxin A (80 aa).

Positions 1–27 (MAAVKKHLRFALVAAITIALLVAGSVA) are cleaved as a signal peptide. Positions 28-44 (DESSEDIDNIVIKTPLD) are excised as a propeptide. Intrachain disulfides connect Cys48–Cys65, Cys53–Cys67, and Cys61–Cys76.

Belongs to the gympietide family. Expressed in trichomes, that are stiff epidermal hairs located on the surface of petioles and leaves. Not expressed in other aerial parts.

It localises to the secreted. Functionally, neurotoxin certainly responsible for the defensive, persistent, and painful stings of the giant stinging tree. Inhibits inactivation of Nav1.7/SCN9A sodium channel in sensory neurons by directly interacting with TMEM233, a newly described Nav-interacting protein. Has virtually no effect on Nav1.7/SCN9A function in heterologous expression systems and in neurons that do not express TMEM233. Also weakly but significantly affects Nav1.8/SCN10A. Coexpression of TMEM233 with Nav also confers ExTxA sensitivity to Nav1.1-Nav1.6. On the Nav1.7/SCN9A channel, causes a significant hyperpolarizing shift in the voltage dependence of activation. Its effects on Nav currents are irreversible, with no apparent reduction in activity even after repeated wash steps over 30 minutes. In vivo, induces nocifensive behavior in mice (licking or biting and shaking or lifting of the affected paw) lasting for approximately 1 hour. In Dendrocnide moroides (Gympie stinging tree), this protein is Moroidotoxin A.